We begin with the raw amino-acid sequence, 142 residues long: E1B protein, small T-antigen (142 aa).

Belongs to the adenoviridae E1B 19 kDa protein family.

The protein localises to the host cell membrane. Its subcellular location is the host nucleus envelope. It localises to the host nucleus lamina. Functionally, putative adenovirus Bcl-2 homolog that inhibits apoptosis induced by TNF or FAS pathways, as well as p53-mediated apoptosis. Without E1B 19K function, virus production is compromised because of premature death of host cell. Interacts with Bax protein in cell lysates. The protein is E1B protein, small T-antigen of Homo sapiens (Human).